Here is a 782-residue protein sequence, read N- to C-terminus: MKISSGAINFSTIPNQVKKLITSIREHTKNGLTSKITSVKNTHTSLNEKFKTGKDSPIEFALPQKIKDFFQPKDKNTLNKTLITVKNIKDTNNAGKKNISAEDVSKMNAAFMRKHIANQTCDYNYRMTGAAPLPGGVSVSANNRPTVSEGRTPPVSPSLSLQATSSPSSPADWAKKLTDAVLRQKAGETLTAADRDFSNADFRNITFSKIFPPSFMERDGDIIKGFNFSNSKFTYSDISHLHFDECRFTYSTLSDVVCSNTKFSNSDMNEVVLQYSITTQQQPSFIDTTLKNTLIRHKANLSGVILNEPDNSSPPSVSGGGNFIRLGDIWLQMPLLWTENAVDGFLNHEHNNGKSILMTIDSLPDKYSQEKVQAMENLVKSLRGGRLTEACIRPVESSLVSVLAHPPYTQSALISEWLGPVQERFFAHQCQTYNDVPLPAPDTYYQQRILPVLLDSFDRNSAAMTTHSGLFNQVILHCMTGVDCTDGTRQKAAALYEQYLAHPAVSPHIHNGLFGNYDGSPDWTTRAADNFLLLSSQDSDTAMMLSTDTLLTMLNPTPDTAWDNFYLLRAGENVSTAQISPVELFRHDFPVFLAAFNQQAVQRRFGELIDIILSTEEHGELNQQFLAATNQKHSTVKLIDDASVSRLATIFDPLLPEGKLSPAHYQHILSAYHLTDATPQKQAETLFCLSTAFARYSSSAIFGTEHDSPPALRGYAEALMQKAWELSPAIFPSSEQFTDWSDRFHGLHGAFTCTSVVADSMQRHARKYFPSVLSSILPLAWA.

The disordered stretch occupies residues 137-171; sequence VSVSANNRPTVSEGRTPPVSPSLSLQATSSPSSPA. Positions 157 to 171 are enriched in low complexity; the sequence is PSLSLQATSSPSSPA. Catalysis depends on Cys753, which acts as the Glycyl thioester intermediate.

Belongs to the SopA E3 ligase family. In terms of processing, ubiquitinated in the presence of host E1 ubiquitin-activating enzyme, E2 ubiquitin-conjugating enzyme and ubiquitin.

The protein resides in the secreted. It is found in the host cell. The catalysed reaction is S-ubiquitinyl-[E2 ubiquitin-conjugating enzyme]-L-cysteine + [acceptor protein]-L-lysine = [E2 ubiquitin-conjugating enzyme]-L-cysteine + N(6)-ubiquitinyl-[acceptor protein]-L-lysine.. Effector proteins function to alter host cell physiology and promote bacterial survival in host tissues. This protein is an E3 ubiquitin ligase that interferes with host's ubiquitination pathway. In Salmonella newport (strain SL254), this protein is E3 ubiquitin-protein ligase SopA (sopA).